Reading from the N-terminus, the 422-residue chain is UPF0761 membrane protein XAC0937 (422 aa).

A run of 6 helical transmembrane segments spans residues 45–65 (VFAL…FPAF), 102–122 (FTVA…HSIE), 151–171 (GTML…LPLF), 179–199 (LAEF…IVLI), 213–233 (ALPG…GFGF), and 247–267 (ALSA…SVLL).

Belongs to the UPF0761 family.

It localises to the cell inner membrane. This Xanthomonas axonopodis pv. citri (strain 306) protein is UPF0761 membrane protein XAC0937.